We begin with the raw amino-acid sequence, 391 residues long: MRDPFDWLDPALDALHRAHWYRQPLLSGTPAAVVSVGEPPRPLINFCSNDYLGLANHPQVKAAAIAAIQQWGTGATGSRLLSGQRHLHAQLERAIAQWKGTEAALVFSSGTAANLGTIAALVDQRDLVLGDAYNHACLKKGARLSHATFYEYPHNNVAALAQLLETHRSQYRRCLILTDGVFSMDGDVAPLAKILALAEAYTAMVLVDDAHGTGVLGTNGAGTLAALGQSSPTIIQMGTLSKALGSLGGYIAGCQALITYLQHRASTWIYSTGLSPADAAAALAALEQLQTDPSLRQALGDRIQQLEKGLQALGCPVLPRPLPTPIFCLPAPDPATVLQWGQELQEAGCWVAAVRPPTVPFSRLRITLRADHTPGHIEQLLAALAALLKCC.

2 residues coordinate substrate: Arg-22 and His-135. Pyridoxal 5'-phosphate is bound by residues Ser-183, 208-211 (DDAH), and 239-242 (TLSK). N6-(pyridoxal phosphate)lysine is present on Lys-242. A substrate-binding site is contributed by Thr-358.

Belongs to the class-II pyridoxal-phosphate-dependent aminotransferase family. BioF subfamily. Homodimer. It depends on pyridoxal 5'-phosphate as a cofactor.

It catalyses the reaction 6-carboxyhexanoyl-[ACP] + L-alanine + H(+) = (8S)-8-amino-7-oxononanoate + holo-[ACP] + CO2. Its pathway is cofactor biosynthesis; biotin biosynthesis. Its function is as follows. Catalyzes the decarboxylative condensation of pimeloyl-[acyl-carrier protein] and L-alanine to produce 8-amino-7-oxononanoate (AON), [acyl-carrier protein], and carbon dioxide. In Thermosynechococcus vestitus (strain NIES-2133 / IAM M-273 / BP-1), this protein is Putative 8-amino-7-oxononanoate synthase (bioF).